A 559-amino-acid polypeptide reads, in one-letter code: (R)-mandelonitrile lyase 1 (559 aa).

Positions 1–27 (MEKSTMSVILFVLHLLVLHLQYSEVHS) are cleaved as a signal peptide. 2 N-linked (GlcNAc...) asparagine glycosylation sites follow: Asn-30 and Asn-44. FAD is bound by residues 63–64 (TS), 82–83 (ER), Thr-133, and 137–140 (NAGV). Asn-145, Asn-162, Asn-178, and Asn-218 each carry an N-linked (GlcNAc...) asparagine glycan. Residue Val-244 coordinates FAD. N-linked (GlcNAc...) asparagine glycosylation is found at Asn-252, Asn-255, Asn-309, Asn-380, Asn-402, Asn-420, and Asn-467. Residues Cys-427 and Cys-478 are joined by a disulfide bond. Tyr-485 is a substrate binding site. 486-487 (WH) contributes to the FAD binding site. The active-site Proton donor is the His-487. Catalysis depends on His-525, which acts as the Proton acceptor. 526 to 527 (PQ) is an FAD binding site.

This sequence belongs to the GMC oxidoreductase family. In terms of assembly, monomer. Requires FAD as cofactor.

It carries out the reaction (R)-mandelonitrile = benzaldehyde + hydrogen cyanide. Functionally, involved in cyanogenesis, the release of HCN from injured tissues. Catalyzes the stereospecific addition of HCN to a variety of aldehydes in vitro. It is a major seed constituent, and could have the additional role of a storage form for reduced nitrogen. The polypeptide is (R)-mandelonitrile lyase 1 (MDL1) (Prunus dulcis (Almond)).